The sequence spans 467 residues: UDP-glycosyltransferase 71D1 (467 aa).

Residue His16 is the Proton acceptor of the active site. His16 contacts an anthocyanidin. The Charge relay role is filled by Asp122. 7 residues coordinate UDP-alpha-D-glucose: Thr144, Gln341, His356, Trp359, Asn360, Ser361, and Glu364. Position 379 (Ala379) interacts with an anthocyanidin. Positions 380 and 381 each coordinate UDP-alpha-D-glucose.

The protein belongs to the UDP-glycosyltransferase family.

It catalyses the reaction a flavonol + UDP-alpha-D-glucose = a flavonol 3-O-beta-D-glucoside + UDP + H(+). Functionally, possesses quercetin 3-O-glucosyltransferase activity in vitro. This chain is UDP-glycosyltransferase 71D1 (UGT71D1), found in Arabidopsis thaliana (Mouse-ear cress).